Reading from the N-terminus, the 132-residue chain is Small ribosomal subunit protein uS8c (132 aa).

This sequence belongs to the universal ribosomal protein uS8 family. As to quaternary structure, part of the 30S ribosomal subunit.

The protein resides in the plastid. It is found in the chloroplast. Functionally, one of the primary rRNA binding proteins, it binds directly to 16S rRNA central domain where it helps coordinate assembly of the platform of the 30S subunit. The chain is Small ribosomal subunit protein uS8c (rps8) from Trieres chinensis (Marine centric diatom).